The chain runs to 2090 residues: Dysferlin (2090 aa).

Positions 1–101 (MLRVFILFAE…LATPSLSASF (101 aa)) constitute a C2 1 domain. Topologically, residues 1–2056 (MLRVFILFAE…FILWRRFRCA (2056 aa)) are cytoplasmic. Ca(2+) is bound by residues D18, I19, D21, and N40. The tract at residues 130 to 217 (VPLFPPPASL…SAPPRKLLSD (88 aa)) is disordered. The span at 155 to 172 (GGEEDTEDQGLTGDEAEP) shows a compositional bias: acidic residues. Phosphoserine is present on G164. A Phosphothreonine modification is found at T166. G167 carries the phosphoserine modification. Residues 188 to 199 (PRKPPSHPPPHY) are compositionally biased toward pro residues. C2 domains are found at residues 206 to 323 (RSSA…RKWL), 362 to 498 (DKED…EEEP), 1146 to 1272 (GVNR…PLTR), 1320 to 1448 (PPPQ…AESP), 1571 to 1689 (PMPP…ARCG), and 1805 to 1953 (GRPG…EKCS). A Phosphoserine modification is found at A209. At P219 the chain carries Phosphothreonine. 9 residues coordinate Ca(2+): D411, D419, D467, D469, D475, D1178, D1184, D1240, and D1242. 7 residues coordinate Ca(2+): D1604, D1610, D1659, D1661, D1924, S1927, and D1930. Residues 2005 to 2027 (SEHEERPAGQGRDEPNMNPKLED) form a disordered region. Residues 2057–2077 (IILFIILFILLLFLGVFVYAF) traverse the membrane as a helical segment. Residues 2078-2090 (PNYAAMKLVKPFR) are Extracellular-facing.

It belongs to the ferlin family. Interacts with CAV3. Interacts with AHNAK; the interaction is direct and Ca(2+)-independent. Interacts with AHNAK2; the interaction is direct and Ca(2+)-independent. Interacts with ANXA1; the interaction is Ca(2+)- and injury state-dependent. Interacts with ANXA2; the interaction is Ca(2+)- and injury state-dependent. Interacts with CACNA1S and PARVB. Interacts with TRIM72/MG53; interaction is required for transport to sites of cell injury during repair patch formation. Interacts with RIPOR2; this interaction occurs during early myogenic differentiation. Ca(2+) is required as a cofactor. In terms of tissue distribution, expressed in skeletal and cardiac muscles (at protein level). Expressed in skeletal muscle and heart. Also found in brain, liver and kidney.

The protein resides in the cell membrane. It is found in the sarcolemma. It localises to the cytoplasmic vesicle membrane. Key calcium ion sensor involved in the Ca(2+)-triggered synaptic vesicle-plasma membrane fusion. Plays a role in the sarcolemma repair mechanism of both skeletal muscle and cardiomyocytes that permits rapid resealing of membranes disrupted by mechanical stress. This chain is Dysferlin (Dysf), found in Mus musculus (Mouse).